A 502-amino-acid chain; its full sequence is mRNA cap guanine-N(7) methyltransferase (502 aa).

The tract at residues 1–118 (MADENPQAQG…SQQEEAMRFS (118 aa)) is disordered. The segment covering 93–115 (LVDRETLRRRQEERERSQQEEAM) has biased composition (basic and acidic residues). The 357-residue stretch at 146–502 (SKIKGLRSFN…FYHAFCFYKV (357 aa)) folds into the mRNA cap 0 methyltransferase domain. 155–156 (NN) contacts mRNA. S-adenosyl-L-methionine is bound by residues Lys-159, Gly-202, Asp-226, Asp-264, 307–309 (MFT), and Tyr-312. Basic and acidic residues predominate over residues 360–369 (ERETAAKKEE). The disordered stretch occupies residues 360–381 (ERETAAKKEEAEPEDGEVEEDD). Residues 370 to 381 (AEPEDGEVEEDD) show a composition bias toward acidic residues.

It belongs to the class I-like SAM-binding methyltransferase superfamily. mRNA cap 0 methyltransferase family.

Its subcellular location is the nucleus. It carries out the reaction a 5'-end (5'-triphosphoguanosine)-ribonucleoside in mRNA + S-adenosyl-L-methionine = a 5'-end (N(7)-methyl 5'-triphosphoguanosine)-ribonucleoside in mRNA + S-adenosyl-L-homocysteine. Functionally, responsible for methylating the 5'-cap structure of mRNAs. This Aspergillus oryzae (strain ATCC 42149 / RIB 40) (Yellow koji mold) protein is mRNA cap guanine-N(7) methyltransferase (abd1).